We begin with the raw amino-acid sequence, 410 residues long: Ribulose bisphosphate carboxylase large chain (410 aa).

Residues asparagine 100 and threonine 150 each contribute to the substrate site. Catalysis depends on lysine 152, which acts as the Proton acceptor. Lysine 154 is a binding site for substrate. Mg(2+)-binding residues include lysine 178, aspartate 180, and glutamate 181. Lysine 178 is subject to N6-carboxylysine. The active-site Proton acceptor is the histidine 271. 3 residues coordinate substrate: arginine 272, histidine 304, and serine 356.

It belongs to the RuBisCO large chain family. Type I subfamily. Heterohexadecamer of 8 large chains and 8 small chains; disulfide-linked. The disulfide link is formed within the large subunit homodimers. Mg(2+) is required as a cofactor. The disulfide bond which can form in the large chain dimeric partners within the hexadecamer appears to be associated with oxidative stress and protein turnover.

The protein localises to the plastid. Its subcellular location is the chloroplast. It catalyses the reaction 2 (2R)-3-phosphoglycerate + 2 H(+) = D-ribulose 1,5-bisphosphate + CO2 + H2O. It carries out the reaction D-ribulose 1,5-bisphosphate + O2 = 2-phosphoglycolate + (2R)-3-phosphoglycerate + 2 H(+). Its function is as follows. RuBisCO catalyzes two reactions: the carboxylation of D-ribulose 1,5-bisphosphate, the primary event in carbon dioxide fixation, as well as the oxidative fragmentation of the pentose substrate in the photorespiration process. Both reactions occur simultaneously and in competition at the same active site. The polypeptide is Ribulose bisphosphate carboxylase large chain (rbcL) (Gleichenia japonica (Urajiro)).